A 524-amino-acid chain; its full sequence is N-acetylgalactosamine-6-sulfatase (524 aa).

The first 27 residues, 1–27 (MTACSTAIRAQQLLLPVLSALGLLAAG), serve as a signal peptide directing secretion. The segment at 28 to 381 (APQPPNIVLL…PTMLQGHIID (354 aa)) is catalytic domain. Asp40, Asp41, and Cys80 together coordinate Ca(2+). Catalysis depends on Cys80, which acts as the Nucleophile. Residue Cys80 is modified to 3-oxoalanine (Cys). The active site involves His143. An N-linked (GlcNAc...) asparagine glycan is attached at Asn205. Positions 290 and 291 each coordinate Ca(2+). Cysteines 310 and 421 form a disulfide. N-linked (GlcNAc...) asparagine glycosylation occurs at Asn425. 2 disulfide bridges follow: Cys491–Cys520 and Cys503–Cys509.

This sequence belongs to the sulfatase family. In terms of assembly, homodimer. Ca(2+) serves as cofactor. The conversion to 3-oxoalanine (also known as C-formylglycine, FGly), of a serine or cysteine residue in prokaryotes and of a cysteine residue in eukaryotes, is critical for catalytic activity.

The protein resides in the lysosome. The catalysed reaction is Hydrolysis of the 6-sulfate groups of the N-acetyl-D-galactosamine 6-sulfate units of chondroitin sulfate and of the D-galactose 6-sulfate units of keratan sulfate.. The polypeptide is N-acetylgalactosamine-6-sulfatase (Galns) (Rattus norvegicus (Rat)).